A 605-amino-acid chain; its full sequence is Glucose oxidase (605 aa).

Positions 1–18 (MVSVFLSTLLLAAATVQA) are cleaved as a signal peptide. FAD contacts are provided by leucine 52, threonine 53, and glutamate 73. Residue asparagine 111 is glycosylated (N-linked (GlcNAc...) asparagine). Residues serine 125, asparagine 129, glycine 130, and serine 132 each contribute to the FAD site. N-linked (GlcNAc...) asparagine glycans are attached at residues asparagine 183 and asparagine 190. Residues cysteine 186 and cysteine 228 are joined by a disulfide bond. An FAD-binding site is contributed by valine 272. 4 N-linked (GlcNAc...) asparagine glycosylation sites follow: asparagine 335, asparagine 375, asparagine 410, and asparagine 519. Histidine 538 serves as the catalytic Proton acceptor. O2-binding residues include lysine 559 and valine 560. Residues glycine 571 and methionine 583 each contribute to the FAD site.

It belongs to the GMC oxidoreductase family. In terms of assembly, homodimer. It depends on FAD as a cofactor.

The protein localises to the secreted. Its subcellular location is the cell wall. The protein resides in the cytoplasmic vesicle. The enzyme catalyses beta-D-glucose + O2 = D-glucono-1,5-lactone + H2O2. In terms of biological role, glucose oxidase catalyzes the oxidation of beta-D-glucose to D-glucono-delta-lactone and hydrogen peroxide in the presence of molecular oxygen. D-glucono-delta-lactone is sequentially hydrolyzed by lactonase to D-gluconic acid, and the resulting hydrogen peroxide is hydrolyzed by catalase to oxygen and water. Glucose oxidase alone indirectly causes toxicity in the presence of glucose and is the active compound of the antifungal antibiotic talaron. Responsible for inhibition of germination of microsclerotia of Verticillium dahliae. The sequence is that of Glucose oxidase from Talaromyces flavus.